A 267-amino-acid polypeptide reads, in one-letter code: U6 snRNA phosphodiesterase 1 (267 aa).

Polar residues predominate over residues 1–13 (MSSAPLVGYSSSG). Positions 1-74 (MSSAPLVGYS…DSAKHGGRIR (74 aa)) are disordered. Histidine 122 functions as the Proton acceptor in the catalytic mechanism. 122–124 (HVS) is an AMP binding site. Residues glutamine 166, tyrosine 204, and 208–212 (SFHIS) contribute to the UMP site. Residues tyrosine 204 and 206–212 (DPSFHIS) each bind AMP. The active-site Proton donor is histidine 210.

This sequence belongs to the 2H phosphoesterase superfamily. USB1 family. Interacts with PLRG1, CDC5L and PRPF19.

It localises to the nucleus. It catalyses the reaction a 3'-end uridylyl-uridine-RNA = a 3'-end 2',3'-cyclophospho-uridine-RNA + uridine. The catalysed reaction is a 3'-end uridylyl-adenosine-RNA = a 3'-end 2',3'-cyclophospho-uridine-RNA + adenosine. In terms of biological role, 3'-5' RNA exonuclease that trims the 3' end of oligo(U) and oligo(A) tracts of the pre-U6 small nuclear RNA (snRNA) molecule, leading to the formation of a mature U6 snRNA 3' end-terminated with a 2',3'-cyclic phosphate. Participates in the U6 snRNA 3' end processing that prevents U6 snRNA degradation. In addition also removes uridines from the 3' end of U6atac snRNA and possibly the vault RNA VTRNA1-1. In Mus musculus (Mouse), this protein is U6 snRNA phosphodiesterase 1.